We begin with the raw amino-acid sequence, 153 residues long: Ribosome maturation factor RimP (153 aa).

This sequence belongs to the RimP family.

Its subcellular location is the cytoplasm. In terms of biological role, required for maturation of 30S ribosomal subunits. The protein is Ribosome maturation factor RimP of Desulforamulus reducens (strain ATCC BAA-1160 / DSM 100696 / MI-1) (Desulfotomaculum reducens).